The primary structure comprises 335 residues: Rho guanine nucleotide exchange factor 39 (335 aa).

The region spanning 22–197 (KRACTARELL…SETAQRVHTI (176 aa)) is the DH domain. Positions 227 to 331 (WFLRQGWLLV…WYHSLTWAIS (105 aa)) constitute a PH domain.

In terms of tissue distribution, strongly expressed in hepatocellular carcinoma (HCC) compared with their non-cancerous counterparts.

Its subcellular location is the cell membrane. Promotes cell proliferation. The protein is Rho guanine nucleotide exchange factor 39 (ARHGEF39) of Homo sapiens (Human).